Consider the following 870-residue polypeptide: Leucine--tRNA ligase (870 aa).

The short motif at 36–46 is the 'HIGH' region element; it reads PYPSGKIHLGH. A 'KMSKS' region motif is present at residues 602–606; sequence KMSKS. Residue Lys-605 coordinates ATP.

This sequence belongs to the class-I aminoacyl-tRNA synthetase family.

Its subcellular location is the cytoplasm. The enzyme catalyses tRNA(Leu) + L-leucine + ATP = L-leucyl-tRNA(Leu) + AMP + diphosphate. This Rickettsia akari (strain Hartford) protein is Leucine--tRNA ligase.